The following is a 653-amino-acid chain: PAN2-PAN3 deadenylation complex subunit PAN3 (653 aa).

Disordered stretches follow at residues 1 to 21 (MASDSRRGTGSPKMKGRENAK) and 45 to 128 (HDPN…AAPD). The C3H1-type zinc-finger motif lies at 19–48 (NAKDTLCRNVTIYGRCRYEDKGCVYNHDPN). Low complexity predominate over residues 68–95 (SFTPSLLSSNGSSPTSSSATLKKTTTIS). The segment covering 108–119 (GISSRSNASTPS) has biased composition (polar residues). Residues 256-516 (QTLPNTQLPA…TIDIFITGIS (261 aa)) are pseudokinase domain. ATP is bound by residues Arg-308, 357–364 (DYHPLSKT), and 416–417 (SK). The stretch at 517–555 (SQLMSTFDSALHMDDQLTSDLSRELENGRLVRLMTKLNF) forms a coiled coil. Residues 556–653 (INERPEYEHD…ALLKPTRRVH (98 aa)) form a knob domain region.

It belongs to the protein kinase superfamily. PAN3 family. As to quaternary structure, homodimer. Forms a heterotrimer with a catalytic subunit pan2 to form the poly(A)-nuclease (PAN) deadenylation complex. Interacts (via PAM-2 motif) with poly(A)-binding protein pab1 (via PABC domain), conferring substrate specificity of the enzyme complex.

It is found in the cytoplasm. Regulatory subunit of the poly(A)-nuclease (PAN) deadenylation complex, one of two cytoplasmic mRNA deadenylases involved in mRNA turnover. PAN specifically shortens poly(A) tails of RNA and the activity is stimulated by poly(A)-binding protein pab1. PAN deadenylation is followed by rapid degradation of the shortened mRNA tails by the CCR4-NOT complex. Deadenylated mRNAs are then degraded by two alternative mechanisms, namely exosome-mediated 3'-5' exonucleolytic degradation, or deadenylation-dependent mRNA decaping and subsequent 5'-3' exonucleolytic degradation by xrn1. May also be involved in post-transcriptional maturation of mRNA poly(A) tails. pan3 acts as a positive regulator for PAN activity, recruiting the catalytic subunit pan2 to mRNA via its interaction with RNA and with pab1. The protein is PAN2-PAN3 deadenylation complex subunit PAN3 of Aspergillus terreus (strain NIH 2624 / FGSC A1156).